The sequence spans 218 residues: tRNA (guanine-N(7)-)-methyltransferase (218 aa).

Residues glutamate 43, aspartate 68, glutamate 101, and asparagine 124 each contribute to the S-adenosyl-L-methionine site. Lysine 128 and aspartate 160 together coordinate substrate.

It belongs to the class I-like SAM-binding methyltransferase superfamily. TrmB family.

It catalyses the reaction guanosine(46) in tRNA + S-adenosyl-L-methionine = N(7)-methylguanosine(46) in tRNA + S-adenosyl-L-homocysteine. It participates in tRNA modification; N(7)-methylguanine-tRNA biosynthesis. Its function is as follows. Catalyzes the formation of N(7)-methylguanine at position 46 (m7G46) in tRNA. This chain is tRNA (guanine-N(7)-)-methyltransferase, found in Acetivibrio thermocellus (strain ATCC 27405 / DSM 1237 / JCM 9322 / NBRC 103400 / NCIMB 10682 / NRRL B-4536 / VPI 7372) (Clostridium thermocellum).